A 337-amino-acid chain; its full sequence is Glyceraldehyde-3-phosphate dehydrogenase (337 aa).

NAD(+) is bound by residues 17–18 (RI), aspartate 39, lysine 83, and serine 125. Residues 156 to 158 (SCT), threonine 187, arginine 202, 215 to 216 (TG), and arginine 238 each bind D-glyceraldehyde 3-phosphate. The Nucleophile role is filled by cysteine 157. Asparagine 319 contributes to the NAD(+) binding site.

Belongs to the glyceraldehyde-3-phosphate dehydrogenase family. As to quaternary structure, homotetramer.

The protein localises to the cytoplasm. The enzyme catalyses D-glyceraldehyde 3-phosphate + phosphate + NAD(+) = (2R)-3-phospho-glyceroyl phosphate + NADH + H(+). Its pathway is carbohydrate degradation; glycolysis; pyruvate from D-glyceraldehyde 3-phosphate: step 1/5. Catalyzes the oxidative phosphorylation of glyceraldehyde 3-phosphate (G3P) to 1,3-bisphosphoglycerate (BPG) using the cofactor NAD. The first reaction step involves the formation of a hemiacetal intermediate between G3P and a cysteine residue, and this hemiacetal intermediate is then oxidized to a thioester, with concomitant reduction of NAD to NADH. The reduced NADH is then exchanged with the second NAD, and the thioester is attacked by a nucleophilic inorganic phosphate to produce BPG. This Mycoplasma genitalium (strain ATCC 33530 / DSM 19775 / NCTC 10195 / G37) (Mycoplasmoides genitalium) protein is Glyceraldehyde-3-phosphate dehydrogenase (gapA).